We begin with the raw amino-acid sequence, 418 residues long: UDP-N-acetylglucosamine 1-carboxyvinyltransferase (418 aa).

22 to 23 (KN) contributes to the phosphoenolpyruvate binding site. Residue arginine 92 participates in UDP-N-acetyl-alpha-D-glucosamine binding. Residue cysteine 116 is the Proton donor of the active site. 2-(S-cysteinyl)pyruvic acid O-phosphothioketal is present on cysteine 116. Residues aspartate 305 and isoleucine 327 each contribute to the UDP-N-acetyl-alpha-D-glucosamine site.

It belongs to the EPSP synthase family. MurA subfamily.

Its subcellular location is the cytoplasm. The catalysed reaction is phosphoenolpyruvate + UDP-N-acetyl-alpha-D-glucosamine = UDP-N-acetyl-3-O-(1-carboxyvinyl)-alpha-D-glucosamine + phosphate. Its pathway is cell wall biogenesis; peptidoglycan biosynthesis. Cell wall formation. Adds enolpyruvyl to UDP-N-acetylglucosamine. The protein is UDP-N-acetylglucosamine 1-carboxyvinyltransferase of Gluconobacter oxydans (strain 621H) (Gluconobacter suboxydans).